The primary structure comprises 548 residues: Beta-caryophyllene synthase (548 aa).

Arg268, Asp305, Asp309, Arg446, and Asp449 together coordinate (2E,6E)-farnesyl diphosphate. 2 residues coordinate Mg(2+): Asp305 and Asp309. Positions 305–309 (DDIYD) match the DDXXD motif motif. 2 residues coordinate Mg(2+): Asp449 and Glu457.

This sequence belongs to the terpene synthase family. It depends on Mg(2+) as a cofactor.

The catalysed reaction is (2E,6E)-farnesyl diphosphate = (-)-(E)-beta-caryophyllene + diphosphate. The protein operates within secondary metabolite biosynthesis; terpenoid biosynthesis. Sesquiterpene synthase that catalyzes the formation of sesquiterpenes and sesquiterpenoid alcohols. Converts farnesyl diphosphate (FPP) to beta-caryophyllene. Can use geranyl diphosphate (GPP) to produce myrcene, limonene and camphene. The protein is Beta-caryophyllene synthase of Lavandula angustifolia (Lavender).